The following is a 130-amino-acid chain: Small ribosomal subunit protein uS9 (130 aa).

The protein belongs to the universal ribosomal protein uS9 family.

The protein is Small ribosomal subunit protein uS9 of Burkholderia ambifaria (strain MC40-6).